A 54-amino-acid polypeptide reads, in one-letter code: MSQNEVDINIISLSEVVSRPNPNKQVVELNRTSLFWGLLLIFVLAVLFSSYIFN.

Residues serine 33–phenylalanine 53 form a helical membrane-spanning segment.

Belongs to the PsbL family. PSII is composed of 1 copy each of membrane proteins PsbA, PsbB, PsbC, PsbD, PsbE, PsbF, PsbH, PsbI, PsbJ, PsbK, PsbL, PsbM, PsbT, PsbX, PsbY, PsbZ, Psb30/Ycf12, at least 3 peripheral proteins of the oxygen-evolving complex and a large number of cofactors. It forms dimeric complexes.

The protein localises to the plastid. It is found in the chloroplast thylakoid membrane. One of the components of the core complex of photosystem II (PSII). PSII is a light-driven water:plastoquinone oxidoreductase that uses light energy to abstract electrons from H(2)O, generating O(2) and a proton gradient subsequently used for ATP formation. It consists of a core antenna complex that captures photons, and an electron transfer chain that converts photonic excitation into a charge separation. This subunit is found at the monomer-monomer interface and is required for correct PSII assembly and/or dimerization. This is Photosystem II reaction center protein L from Stigeoclonium helveticum (Green alga).